A 400-amino-acid chain; its full sequence is Tryptophan 2,3-dioxygenase (400 aa).

Substrate-binding positions include 75-79 (FIIIH) and arginine 146. Histidine 332 is a binding site for heme. Residue threonine 346 coordinates substrate.

The protein belongs to the tryptophan 2,3-dioxygenase family. As to quaternary structure, homotetramer. Dimer of dimers. It depends on heme as a cofactor.

The catalysed reaction is L-tryptophan + O2 = N-formyl-L-kynurenine. The protein operates within amino-acid degradation; L-tryptophan degradation via kynurenine pathway; L-kynurenine from L-tryptophan: step 1/2. In terms of biological role, heme-dependent dioxygenase that catalyzes the oxidative cleavage of the L-tryptophan (L-Trp) pyrrole ring and converts L-tryptophan to N-formyl-L-kynurenine. Catalyzes the oxidative cleavage of the indole moiety. This Dictyostelium discoideum (Social amoeba) protein is Tryptophan 2,3-dioxygenase.